Reading from the N-terminus, the 201-residue chain is MSRYRGPRLKKIRRLGALPGLTSKGTRPGSDLRNQFRSGKRSQYRIRLEEKQKLRFHYGLTERQLLRYVHIAGKAKGSTGQVLLQLLEMRLDNILFRLGMAPTIPGARQLVNHRHILVNGRIVDIPSYRCKPRDIITTKDKQRSKVLIQNNMDSSTREELPKHLTLDSFQHKGLVNQIIDSKWVGLKINELLVVEYYSRQT.

Residues M89–N150 form the S4 RNA-binding domain.

Belongs to the universal ribosomal protein uS4 family. Part of the 30S ribosomal subunit. Contacts protein S5. The interaction surface between S4 and S5 is involved in control of translational fidelity.

The protein resides in the plastid. Its subcellular location is the chloroplast. Its function is as follows. One of the primary rRNA binding proteins, it binds directly to 16S rRNA where it nucleates assembly of the body of the 30S subunit. In terms of biological role, with S5 and S12 plays an important role in translational accuracy. This chain is Small ribosomal subunit protein uS4c (rps4), found in Acorus calamus (Sweet flag).